The chain runs to 160 residues: Globin CTT-II beta (160 aa).

The first 15 residues, 1-15, serve as a signal peptide directing secretion; the sequence is MKFLVLALCIAAAVA. One can recognise a Globin domain in the interval 17 to 160; sequence PLSADEASLV…NVFNMMFSYL (144 aa). Heme b contacts are provided by His-75 and His-110.

This sequence belongs to the globin family. Homodimer.

This chain is Globin CTT-II beta, found in Chironomus thummi thummi (Midge).